The chain runs to 462 residues: L-seryl-tRNA(Sec) selenium transferase (462 aa).

Lys-292 carries the N6-(pyridoxal phosphate)lysine modification.

Belongs to the SelA family. Requires pyridoxal 5'-phosphate as cofactor.

Its subcellular location is the cytoplasm. It catalyses the reaction L-seryl-tRNA(Sec) + selenophosphate + H(+) = L-selenocysteinyl-tRNA(Sec) + phosphate. Its pathway is aminoacyl-tRNA biosynthesis; selenocysteinyl-tRNA(Sec) biosynthesis; selenocysteinyl-tRNA(Sec) from L-seryl-tRNA(Sec) (bacterial route): step 1/1. In terms of biological role, converts seryl-tRNA(Sec) to selenocysteinyl-tRNA(Sec) required for selenoprotein biosynthesis. The protein is L-seryl-tRNA(Sec) selenium transferase of Geotalea uraniireducens (strain Rf4) (Geobacter uraniireducens).